The following is a 270-amino-acid chain: Putative hydro-lyase H16_B1759 (270 aa).

It belongs to the D-glutamate cyclase family.

The polypeptide is Putative hydro-lyase H16_B1759 (Cupriavidus necator (strain ATCC 17699 / DSM 428 / KCTC 22496 / NCIMB 10442 / H16 / Stanier 337) (Ralstonia eutropha)).